A 127-amino-acid polypeptide reads, in one-letter code: Serum amyloid A protein (127 aa).

The N-terminal stretch at 1 to 18 is a signal peptide; it reads MKLLTSLFLLSLVLCVNS. Residue Gln19 is modified to Pyrrolidone carboxylic acid. The tract at residues 89-127 is disordered; it reads GGSSGRGVEDSMADQEANRWGRSGKDPNRYRPKGLDPKY. Residues 104 to 127 are compositionally biased toward basic and acidic residues; the sequence is EANRWGRSGKDPNRYRPKGLDPKY.

The protein belongs to the SAA family. In terms of tissue distribution, expressed by the liver; secreted in plasma.

The protein resides in the secreted. Its function is as follows. Major acute phase reactant. Apolipoprotein of the HDL complex. In Notamacropus eugenii (Tammar wallaby), this protein is Serum amyloid A protein (SAA1).